Consider the following 920-residue polypeptide: 2-oxoglutarate dehydrogenase E1 component (920 aa).

It belongs to the alpha-ketoglutarate dehydrogenase family. As to quaternary structure, homodimer. Part of the 2-oxoglutarate dehydrogenase (OGDH) complex composed of E1 (2-oxoglutarate dehydrogenase), E2 (dihydrolipoamide succinyltransferase) and E3 (dihydrolipoamide dehydrogenase); the complex contains multiple copies of the three enzymatic components (E1, E2 and E3). Requires thiamine diphosphate as cofactor.

The enzyme catalyses N(6)-[(R)-lipoyl]-L-lysyl-[protein] + 2-oxoglutarate + H(+) = N(6)-[(R)-S(8)-succinyldihydrolipoyl]-L-lysyl-[protein] + CO2. E1 component of the 2-oxoglutarate dehydrogenase (OGDH) complex which catalyzes the decarboxylation of 2-oxoglutarate, the first step in the conversion of 2-oxoglutarate to succinyl-CoA and CO(2). In Leptospira interrogans serogroup Icterohaemorrhagiae serovar copenhageni (strain Fiocruz L1-130), this protein is 2-oxoglutarate dehydrogenase E1 component.